Consider the following 178-residue polypeptide: Crossover junction endodeoxyribonuclease RuvC (178 aa).

Active-site residues include D8, E72, and D144. Residues D8, E72, and D144 each coordinate Mg(2+).

This sequence belongs to the RuvC family. As to quaternary structure, homodimer which binds Holliday junction (HJ) DNA. The HJ becomes 2-fold symmetrical on binding to RuvC with unstacked arms; it has a different conformation from HJ DNA in complex with RuvA. In the full resolvosome a probable DNA-RuvA(4)-RuvB(12)-RuvC(2) complex forms which resolves the HJ. Mg(2+) is required as a cofactor.

Its subcellular location is the cytoplasm. The enzyme catalyses Endonucleolytic cleavage at a junction such as a reciprocal single-stranded crossover between two homologous DNA duplexes (Holliday junction).. In terms of biological role, the RuvA-RuvB-RuvC complex processes Holliday junction (HJ) DNA during genetic recombination and DNA repair. Endonuclease that resolves HJ intermediates. Cleaves cruciform DNA by making single-stranded nicks across the HJ at symmetrical positions within the homologous arms, yielding a 5'-phosphate and a 3'-hydroxyl group; requires a central core of homology in the junction. The consensus cleavage sequence is 5'-(A/T)TT(C/G)-3'. Cleavage occurs on the 3'-side of the TT dinucleotide at the point of strand exchange. HJ branch migration catalyzed by RuvA-RuvB allows RuvC to scan DNA until it finds its consensus sequence, where it cleaves and resolves the cruciform DNA. This chain is Crossover junction endodeoxyribonuclease RuvC, found in Idiomarina loihiensis (strain ATCC BAA-735 / DSM 15497 / L2-TR).